We begin with the raw amino-acid sequence, 271 residues long: Ribosomal RNA small subunit methyltransferase A (271 aa).

S-adenosyl-L-methionine is bound by residues histidine 11, leucine 13, glycine 38, glutamate 59, aspartate 84, and asparagine 109.

The protein belongs to the class I-like SAM-binding methyltransferase superfamily. rRNA adenine N(6)-methyltransferase family. RsmA subfamily.

The protein localises to the cytoplasm. It catalyses the reaction adenosine(1518)/adenosine(1519) in 16S rRNA + 4 S-adenosyl-L-methionine = N(6)-dimethyladenosine(1518)/N(6)-dimethyladenosine(1519) in 16S rRNA + 4 S-adenosyl-L-homocysteine + 4 H(+). Its function is as follows. Specifically dimethylates two adjacent adenosines (A1518 and A1519) in the loop of a conserved hairpin near the 3'-end of 16S rRNA in the 30S particle. May play a critical role in biogenesis of 30S subunits. The protein is Ribosomal RNA small subunit methyltransferase A of Nostoc sp. (strain PCC 7120 / SAG 25.82 / UTEX 2576).